Here is a 420-residue protein sequence, read N- to C-terminus: Glutamyl-tRNA reductase (420 aa).

Residues 49–52 (TCNR), Ser-109, 114–116 (EPQ), and Gln-120 each bind substrate. Catalysis depends on Cys-50, which acts as the Nucleophile. 189 to 194 (GAGETI) contacts NADP(+).

This sequence belongs to the glutamyl-tRNA reductase family. In terms of assembly, homodimer.

It carries out the reaction (S)-4-amino-5-oxopentanoate + tRNA(Glu) + NADP(+) = L-glutamyl-tRNA(Glu) + NADPH + H(+). Its pathway is porphyrin-containing compound metabolism; protoporphyrin-IX biosynthesis; 5-aminolevulinate from L-glutamyl-tRNA(Glu): step 1/2. Functionally, catalyzes the NADPH-dependent reduction of glutamyl-tRNA(Glu) to glutamate 1-semialdehyde (GSA). The sequence is that of Glutamyl-tRNA reductase from Yersinia enterocolitica serotype O:8 / biotype 1B (strain NCTC 13174 / 8081).